A 233-amino-acid chain; its full sequence is MPAAKRTPKVNRNPDLIRGVGKYSRSQMYHKRGLWAIKAKNGGVFPRHDAQPKVDAPVEKPAKFYPAEDVKKPLVNRRKPKPTKLKASITPGTVLIILAGRFKGKRVVFLKQLSSGLLLVTGPFKINGVPLRRVNQAYVIGTSTKIDISGVNTEKFDDKYFGKVAEKKKKKTEGEFFEAEKEEKKEIPQEKKEDQKTVDAALIKSIEAVPELKVYLGARFSLSQGMKPHELVF.

The tract at residues 175-195 is disordered; sequence EFFEAEKEEKKEIPQEKKEDQ.

The protein belongs to the eukaryotic ribosomal protein eL6 family.

The sequence is that of Large ribosomal subunit protein eL6z (RPL6A) from Arabidopsis thaliana (Mouse-ear cress).